The following is a 144-amino-acid chain: MRLNTLSPAAGSKHAPKRVGRGMGSGLGKTAGRGHKGQKSRSGGGVRPGFEGGQMPLKIRLPKFGFTSRRAMVTAEVRVLELAKVNGDVIDLNALKDANVITRNIQFAKIVLSGTIERPVTVKGLKVTKGARAAIEAAGGKIEE.

A disordered region spans residues 1–54; that stretch reads MRLNTLSPAAGSKHAPKRVGRGMGSGLGKTAGRGHKGQKSRSGGGVRPGFEGGQ. Gly residues-rich tracts occupy residues 21-31 and 42-52; these read RGMGSGLGKTA and SGGGVRPGFEG.

Belongs to the universal ribosomal protein uL15 family. Part of the 50S ribosomal subunit.

Functionally, binds to the 23S rRNA. The chain is Large ribosomal subunit protein uL15 from Shewanella baltica (strain OS223).